Here is a 320-residue protein sequence, read N- to C-terminus: tRNA N6-adenosine threonylcarbamoyltransferase (320 aa).

Residues H114 and H118 each coordinate Fe cation. Residues 136-140, D169, G182, D186, and N273 contribute to the substrate site; that span reads VVSGG. D297 lines the Fe cation pocket.

This sequence belongs to the KAE1 / TsaD family. Requires Fe(2+) as cofactor.

Its subcellular location is the cytoplasm. It carries out the reaction L-threonylcarbamoyladenylate + adenosine(37) in tRNA = N(6)-L-threonylcarbamoyladenosine(37) in tRNA + AMP + H(+). Functionally, required for the formation of a threonylcarbamoyl group on adenosine at position 37 (t(6)A37) in tRNAs that read codons beginning with adenine. Is involved in the transfer of the threonylcarbamoyl moiety of threonylcarbamoyl-AMP (TC-AMP) to the N6 group of A37, together with TsaE and TsaB. TsaD likely plays a direct catalytic role in this reaction. The chain is tRNA N6-adenosine threonylcarbamoyltransferase from Ureaplasma parvum serovar 3 (strain ATCC 27815 / 27 / NCTC 11736).